A 550-amino-acid polypeptide reads, in one-letter code: Chaperonin GroEL (550 aa).

Residues 29–32 (TAGP), K50, 86–90 (DGTTT), G418, and D499 contribute to the ATP site.

Belongs to the chaperonin (HSP60) family. In terms of assembly, forms a cylinder of 14 subunits composed of two heptameric rings stacked back-to-back. Interacts with the co-chaperonin GroES.

The protein localises to the cytoplasm. It catalyses the reaction ATP + H2O + a folded polypeptide = ADP + phosphate + an unfolded polypeptide.. In terms of biological role, together with its co-chaperonin GroES, plays an essential role in assisting protein folding. The GroEL-GroES system forms a nano-cage that allows encapsulation of the non-native substrate proteins and provides a physical environment optimized to promote and accelerate protein folding. The polypeptide is Chaperonin GroEL (Wolbachia sp. subsp. Brugia malayi (strain TRS)).